The chain runs to 372 residues: Beta-1,3-N-acetylglucosaminyltransferase radical fringe (372 aa).

At methionine 1 to arginine 10 the chain is on the cytoplasmic side. The chain crosses the membrane as a helical; Signal-anchor for type II membrane protein span at residues threonine 11–leucine 27. Residues proline 28–serine 372 lie on the Lumenal side of the membrane. Residues glycine 30–proline 48 show a composition bias toward pro residues. The disordered stretch occupies residues glycine 30 to serine 96. Residues aspartate 64–valine 78 show a composition bias toward gly residues. A substrate-binding site is contributed by arginine 120. N-linked (GlcNAc...) asparagine glycosylation is present at asparagine 159. Intrachain disulfides connect cysteine 160–cysteine 171 and cysteine 189–cysteine 253. A substrate-binding site is contributed by aspartate 193. Residue aspartate 194 coordinates Mn(2+). Residue aspartate 283 is part of the active site. Position 307 (histidine 307) interacts with Mn(2+). Cysteine 357 and cysteine 366 form a disulfide bridge.

The protein belongs to the glycosyltransferase 31 family. Requires Mn(2+) as cofactor.

It is found in the golgi apparatus membrane. It catalyses the reaction 3-O-(alpha-L-fucosyl)-L-threonyl-[EGF-like domain protein] + UDP-N-acetyl-alpha-D-glucosamine = 3-O-(N-acetyl-beta-D-glucosaminyl-(1-&gt;3)-alpha-L-fucosyl)-L-threonyl-[EGF-like domain protein] + UDP + H(+). It carries out the reaction 3-O-(alpha-L-fucosyl)-L-seryl-[EGF-like domain protein] + UDP-N-acetyl-alpha-D-glucosamine = 3-O-(N-acetyl-beta-D-glucosaminyl-(1-&gt;3)-alpha-L-fucosyl)-L-seryl-[EGF-like domain protein] + UDP + H(+). Glycosyltransferase that initiates the elongation of O-linked fucose residues attached to EGF-like repeats in the extracellular domain of Notch molecules. Plays an important role in limb outgrowth, it directs the formation and positioning of the apical ectodermal ridge (AER), one of the key organizer centers of vertebrate limb development. The chain is Beta-1,3-N-acetylglucosaminyltransferase radical fringe (RFNG) from Gallus gallus (Chicken).